We begin with the raw amino-acid sequence, 376 residues long: DNA repair protein RAD51 homolog 3 (376 aa).

The interval 1 to 126 is required for Holliday junction resolution activity; the sequence is MRGKTFRFEM…LMKTTEICGA (126 aa). S20 bears the Phosphoserine mark. The interaction with RAD51B, RAD51D and XRCC3 stretch occupies residues 79 to 136; sequence SESHKKCTALELLEQEHTQGFIITFCSALDDILGGGVPLMKTTEICGAPGVGKTQLCM. 125–132 contributes to the ATP binding site; the sequence is GAPGVGKT. A Nuclear localization signal motif is present at residues 366–370; the sequence is RKRSR.

Belongs to the RecA family. RAD51 subfamily. In terms of assembly, part of the RAD51 paralog protein complexes BCDX2 and CX3; the complexes have a ring-like structure arranged into a flat disc around a central channel. The BCDX2 complex consits of RAD51B, RAD51C, RAD51D and XRCC2; the CX3 complex consists of RAD51C and XRCC3. The BCDX2 subcomplex RAD51B:RAD51C interacts with RAD51. Interacts with SWSAP1; involved in homologous recombination repair. Interacts directly with PALB2 which may serve as a scaffold for a HR complex containing PALB2, BRCA2, RAD51C, RAD51 and XRCC3. Interacts with HELQ. Interacts with DNA damage up-regulated protein DDUP. Expressed in a variety of tissues, with highest expression in testis, heart muscle, spleen and prostate.

Its subcellular location is the nucleus. It is found in the cytoplasm. The protein resides in the perinuclear region. The protein localises to the mitochondrion. In terms of biological role, essential for the homologous recombination (HR) pathway of DNA repair. Involved in the homologous recombination repair (HRR) pathway of double-stranded DNA breaks arising during DNA replication or induced by DNA-damaging agents. Part of the RAD51 paralog protein complexes BCDX2 and CX3 which act at different stages of the BRCA1-BRCA2-dependent HR pathway. Upon DNA damage, BCDX2 seems to act downstream of BRCA2 recruitment and upstream of RAD51 recruitment; CX3 seems to act downstream of RAD51 recruitment; both complexes bind predominantly to the intersection of the four duplex arms of the Holliday junction (HJ) and to junction of replication forks. The BCDX2 complex was originally reported to bind single-stranded DNA, single-stranded gaps in duplex DNA and specifically to nicks in duplex DNA. The BCDX2 subcomplex RAD51B:RAD51C exhibits single-stranded DNA-dependent ATPase activity suggesting an involvement in early stages of the HR pathway. Involved in RAD51 foci formation in response to DNA damage suggesting an involvement in early stages of HR probably in the invasion step. Has an early function in DNA repair in facilitating phosphorylation of the checkpoint kinase CHEK2 and thereby transduction of the damage signal, leading to cell cycle arrest and HR activation. Participates in branch migration and HJ resolution and thus is important for processing HR intermediates late in the DNA repair process; the function may be linked to the CX3 complex. Part of a PALB2-scaffolded HR complex containing BRCA2 and which is thought to play a role in DNA repair by HR. Protects RAD51 from ubiquitin-mediated degradation that is enhanced following DNA damage. Plays a role in regulating mitochondrial DNA copy number under conditions of oxidative stress in the presence of RAD51 and XRCC3. Contributes to DNA cross-link resistance, sister chromatid cohesion and genomic stability. Involved in maintaining centrosome number in mitosis. The sequence is that of DNA repair protein RAD51 homolog 3 (RAD51C) from Homo sapiens (Human).